We begin with the raw amino-acid sequence, 1058 residues long: Carbamoyl phosphate synthase large chain (1058 aa).

The carboxyphosphate synthetic domain stretch occupies residues 1–401; sequence MPKRTDIKKI…SLLKACRSLE (401 aa). Residues R129, R169, G175, G176, K208, I210, E215, G241, I242, H243, Q284, and E298 each coordinate ATP. The 195-residue stretch at 133 to 327 folds into the ATP-grasp 1 domain; sequence KALMKALKQP…IAKIAAKIAI (195 aa). The Mg(2+) site is built by Q284, E298, and N300. Q284, E298, and N300 together coordinate Mn(2+). Residues 402–546 are oligomerization domain; sequence IGIYHNECKE…YSTYAFENES (145 aa). The carbamoyl phosphate synthetic domain stretch occupies residues 547–929; that stretch reads QASPNKSILV…ALYKAFEASY (383 aa). The ATP-grasp 2 domain maps to 671-861; sequence EKALHDINIP…MAQVATKLIL (191 aa). Positions 707, 746, 748, 752, 777, 778, 779, 780, 820, and 832 each coordinate ATP. Mg(2+)-binding residues include Q820, E832, and N834. Mn(2+)-binding residues include Q820, E832, and N834. An MGS-like domain is found at 930 to 1058; sequence MHVPDFGNII…ESRSFSIQSL (129 aa). The tract at residues 930 to 1058 is allosteric domain; it reads MHVPDFGNII…ESRSFSIQSL (129 aa).

It belongs to the CarB family. In terms of assembly, composed of two chains; the small (or glutamine) chain promotes the hydrolysis of glutamine to ammonia, which is used by the large (or ammonia) chain to synthesize carbamoyl phosphate. Tetramer of heterodimers (alpha,beta)4. Mg(2+) serves as cofactor. The cofactor is Mn(2+).

The catalysed reaction is hydrogencarbonate + L-glutamine + 2 ATP + H2O = carbamoyl phosphate + L-glutamate + 2 ADP + phosphate + 2 H(+). The enzyme catalyses hydrogencarbonate + NH4(+) + 2 ATP = carbamoyl phosphate + 2 ADP + phosphate + 2 H(+). Its pathway is amino-acid biosynthesis; L-arginine biosynthesis; carbamoyl phosphate from bicarbonate: step 1/1. It participates in pyrimidine metabolism; UMP biosynthesis via de novo pathway; (S)-dihydroorotate from bicarbonate: step 1/3. Its function is as follows. Large subunit of the glutamine-dependent carbamoyl phosphate synthetase (CPSase). CPSase catalyzes the formation of carbamoyl phosphate from the ammonia moiety of glutamine, carbonate, and phosphate donated by ATP, constituting the first step of 2 biosynthetic pathways, one leading to arginine and/or urea and the other to pyrimidine nucleotides. The large subunit (synthetase) binds the substrates ammonia (free or transferred from glutamine from the small subunit), hydrogencarbonate and ATP and carries out an ATP-coupled ligase reaction, activating hydrogencarbonate by forming carboxy phosphate which reacts with ammonia to form carbamoyl phosphate. The protein is Carbamoyl phosphate synthase large chain of Streptococcus uberis (strain ATCC BAA-854 / 0140J).